The primary structure comprises 268 residues: Small ribosomal subunit protein eS1 (268 aa).

Positions 1 to 21 are disordered; the sequence is MAVGKNKGLSKGGKKGGKKKV.

The protein belongs to the eukaryotic ribosomal protein eS1 family. As to quaternary structure, component of the small ribosomal subunit. Mature ribosomes consist of a small (40S) and a large (60S) subunit. The 40S subunit contains about 33 different proteins and 1 molecule of RNA (18S). The 60S subunit contains about 49 different proteins and 3 molecules of RNA (28S, 5.8S and 5S).

Its subcellular location is the cytoplasm. Essential for oogenesis; required for late follicle cell development. This chain is Small ribosomal subunit protein eS1, found in Drosophila mojavensis (Fruit fly).